The primary structure comprises 411 residues: Serine hydroxymethyltransferase (411 aa).

(6S)-5,6,7,8-tetrahydrofolate is bound by residues L117 and G121–L123. Position 226 is an N6-(pyridoxal phosphate)lysine (K226). (6S)-5,6,7,8-tetrahydrofolate is bound by residues E241 and S349 to F351.

The protein belongs to the SHMT family. As to quaternary structure, homodimer. Pyridoxal 5'-phosphate serves as cofactor.

The protein resides in the cytoplasm. It carries out the reaction (6R)-5,10-methylene-5,6,7,8-tetrahydrofolate + glycine + H2O = (6S)-5,6,7,8-tetrahydrofolate + L-serine. The protein operates within one-carbon metabolism; tetrahydrofolate interconversion. It participates in amino-acid biosynthesis; glycine biosynthesis; glycine from L-serine: step 1/1. Functionally, catalyzes the reversible interconversion of serine and glycine with tetrahydrofolate (THF) serving as the one-carbon carrier. This reaction serves as the major source of one-carbon groups required for the biosynthesis of purines, thymidylate, methionine, and other important biomolecules. Also exhibits THF-independent aldolase activity toward beta-hydroxyamino acids, producing glycine and aldehydes, via a retro-aldol mechanism. This Macrococcus caseolyticus (strain JCSC5402) (Macrococcoides caseolyticum) protein is Serine hydroxymethyltransferase.